We begin with the raw amino-acid sequence, 268 residues long: Centromere protein Q (268 aa).

The disordered stretch occupies residues 1–80; the sequence is MSGKANASKK…KTWQPLSKST (80 aa). A phosphoserine mark is found at S31 and S50. Over residues 58 to 72 the composition is skewed to basic residues; the sequence is TNLKHGKTAASKRKT. Residues 170 to 206 are a coiled coil; it reads ELMTGNIQSLKNKIQILASEVEEEEERVKQMHQINSS. At S249 the chain carries Phosphoserine.

Belongs to the CENP-Q/OKP1 family. Component of the CENPA-CAD complex, composed of CENPI, CENPK, CENPL, CENPO, CENPP, CENPQ, CENPR and CENPS. The CENPA-CAD complex interacts with the CENPA-NAC complex, at least composed of CENPA, CENPC, CENPH, CENPM, CENPN, CENPT and CENPU. In terms of processing, phosphorylation at Ser-50 is essential for CENPE recruitment to kinetochores and orderly chromosome congression.

It localises to the nucleus. The protein resides in the chromosome. Its subcellular location is the centromere. Functionally, component of the CENPA-CAD (nucleosome distal) complex, a complex recruited to centromeres which is involved in assembly of kinetochore proteins, mitotic progression and chromosome segregation. May be involved in incorporation of newly synthesized CENPA into centromeres via its interaction with the CENPA-NAC complex. Plays an important role in chromosome congression and in the recruitment of CENP-O complex (which comprises CENPO, CENPP, CENPQ and CENPU), CENPE and PLK1 to the kinetochores. The protein is Centromere protein Q (CENPQ) of Homo sapiens (Human).